Consider the following 578-residue polypeptide: Zinc finger protein 248 (578 aa).

One can recognise a KRAB domain in the interval 8–78 (VSFKDVCVDF…LEKGFPSQDP (71 aa)). The C2H2-type 1; degenerate zinc finger occupies 239 to 263 (TVCKYNECGRTFIESLKLNISQRPH). Lys-340 participates in a covalent cross-link: Glycyl lysine isopeptide (Lys-Gly) (interchain with G-Cter in SUMO2). C2H2-type zinc fingers lie at residues 379–401 (FECGECGKTFWEKSNLTQHQRTH), 407–429 (YECTECGKAFCQKPHLTNHQRTH), 435–457 (YECKQCGKTFCVKSNLTEHQRTH), 463–485 (YECNACGKSFCHRSALTVHQRTH), 491–513 (FICNECGKSFCVKSNLIVHQRTH), 519–542 (YKCNECGKTFCEKSALTKHQRTHT), and 547–569 (YECNACGKTFSQRSVLTKHQRIH).

Belongs to the krueppel C2H2-type zinc-finger protein family.

It is found in the nucleus. May be involved in transcriptional regulation. The sequence is that of Zinc finger protein 248 (ZNF248) from Pongo abelii (Sumatran orangutan).